Here is a 571-residue protein sequence, read N- to C-terminus: Glutamine--tRNA ligase (571 aa).

Positions 35–45 match the 'HIGH' region motif; it reads PEPNGYLHIGH. ATP contacts are provided by residues 36–38 and 42–48; these read EPN and HIGHAKS. Asp68 and Tyr213 together coordinate L-glutamine. Residues Thr232, 262–263, and 270–272 each bind ATP; these read RL and LSK. The short motif at 269–273 is the 'KMSKS' region element; sequence ILSKR.

The protein belongs to the class-I aminoacyl-tRNA synthetase family. In terms of assembly, monomer.

The protein localises to the cytoplasm. It catalyses the reaction tRNA(Gln) + L-glutamine + ATP = L-glutaminyl-tRNA(Gln) + AMP + diphosphate. This Buchnera aphidicola subsp. Acyrthosiphon pisum (strain APS) (Acyrthosiphon pisum symbiotic bacterium) protein is Glutamine--tRNA ligase.